The sequence spans 507 residues: E3 ubiquitin-protein ligase TRIM31 (507 aa).

The segment at 16-56 (CPICMEILQDPVTIDCGHNFCLQCISQVGKTSEKIQCPLCK) adopts an RING-type zinc-finger fold. The segment at 89 to 130 (KEDSRCQRHKEKLHYFCEQDGAFLCVVCRDSKDHKSHNVTLI) adopts a B box-type zinc-finger fold. Positions 94, 97, 116, and 122 each coordinate Zn(2+). 2 coiled-coil regions span residues 176–241 (EKLK…LQSS) and 269–298 (EDLE…DMNA). One can recognise a B30.2/SPRY domain in the interval 315-507 (EKESWSLLQK…VACSHITLSP (193 aa)).

Belongs to the TRIM/RBCC family. May form oligomers. Interacts with isoform p52shc of SHC1. In terms of processing, auto-ubiquitinated (in vitro). Highly expressed in the gastrointestrinal tract, with high expression in the small intestine, moderate in the large intestine and weak in the stomach and esophagus.

The protein localises to the cytoplasm. It localises to the mitochondrion. The catalysed reaction is S-ubiquitinyl-[E2 ubiquitin-conjugating enzyme]-L-cysteine + [acceptor protein]-L-lysine = [E2 ubiquitin-conjugating enzyme]-L-cysteine + N(6)-ubiquitinyl-[acceptor protein]-L-lysine.. The protein operates within protein modification; protein ubiquitination. Functionally, E3 ubiquitin-protein ligase that acts as a regulator of antiviral immune response and inflammation by mediating ubiquitination of substrates. Acts as a regulator of innate immune defense against viruses by mediating 'Lys-63'-linked ubiquitination of MAVS, promoting MAVS polymerization and formation of three-stranded helical filaments on mitochondria. Acts as a negative regulator of the NLRP3 inflammasome by catalyzing 'Lys-48'-linked ubiquitination of NLRP3, leading to its degradation. Regulator of Src-induced anchorage independent cell growth. This Mus musculus (Mouse) protein is E3 ubiquitin-protein ligase TRIM31.